A 146-amino-acid chain; its full sequence is Large ribosomal subunit protein uL15 (146 aa).

Residues 1–52 are disordered; that stretch reads MKLSNLSPKAGSKKRRRRVGRGIAAGQGASCGFGMRGQKSRSGTGTKAGFEG. Over residues 11–20 the composition is skewed to basic residues; it reads GSKKRRRRVG. Gly residues predominate over residues 23 to 35; the sequence is IAAGQGASCGFGM.

It belongs to the universal ribosomal protein uL15 family. As to quaternary structure, part of the 50S ribosomal subunit.

Binds to the 23S rRNA. This Picosynechococcus sp. (strain ATCC 27264 / PCC 7002 / PR-6) (Agmenellum quadruplicatum) protein is Large ribosomal subunit protein uL15.